The following is a 211-amino-acid chain: MSTQTNTKSDFSELDWDKQDGLIPAVIQNHLSGKVLMLGYMDKAALEQTLATGDVTFFSRSKQRLWTKGETSGHTLKLVAIDKDCDNDSLLVQVLPNGPTCHKGTESCWLDGNAHPFLNNLAELIASRKGQSPESSYTASLFARGTKRIAQKVGEEGLETALAAATHDKEELVNEASDLMYHLLVLLEDQALSLSDITANLLARHQKAQRK.

The phosphoribosyl-AMP cyclohydrolase stretch occupies residues 1 to 117; sequence MSTQTNTKSD…CWLDGNAHPF (117 aa). A phosphoribosyl-ATP pyrophosphohydrolase region spans residues 118–211; it reads LNNLAELIAS…LARHQKAQRK (94 aa).

It in the N-terminal section; belongs to the PRA-CH family. This sequence in the C-terminal section; belongs to the PRA-PH family.

It localises to the cytoplasm. The enzyme catalyses 1-(5-phospho-beta-D-ribosyl)-ATP + H2O = 1-(5-phospho-beta-D-ribosyl)-5'-AMP + diphosphate + H(+). It carries out the reaction 1-(5-phospho-beta-D-ribosyl)-5'-AMP + H2O = 1-(5-phospho-beta-D-ribosyl)-5-[(5-phospho-beta-D-ribosylamino)methylideneamino]imidazole-4-carboxamide. Its pathway is amino-acid biosynthesis; L-histidine biosynthesis; L-histidine from 5-phospho-alpha-D-ribose 1-diphosphate: step 2/9. It participates in amino-acid biosynthesis; L-histidine biosynthesis; L-histidine from 5-phospho-alpha-D-ribose 1-diphosphate: step 3/9. The chain is Histidine biosynthesis bifunctional protein HisIE from Shewanella oneidensis (strain ATCC 700550 / JCM 31522 / CIP 106686 / LMG 19005 / NCIMB 14063 / MR-1).